A 376-amino-acid chain; its full sequence is Proteasome-interacting protein CIC1 (376 aa).

Disordered stretches follow at residues 1-29 (MAKK…KKSS) and 356-376 (RSSS…KAKS). The interval 310-376 (ETHEDDMVTI…ESEAVKKAKS (67 aa)) is required for interaction with CDC4. Over residues 357-376 (SSSELEKESSESEAVKKAKS) the composition is skewed to basic and acidic residues.

Interacts with CDC4, PRE4, PRE6, RPT1 and SCL1 as part of the fully assembled 26S proteasome. Interacts with pre-ribosomal particles constituent NOP7.

It is found in the nucleus. Its subcellular location is the nucleolus. Functionally, an adapter protein that specifically links the 26S proteasome to its substrate CDC4 which is one of the substrate recognition subunits of the SCF E3 ubiquitin ligase complex. Required for turnover of cell cycle regulatory proteins CDC4 and GRR1. Required for synthesis and nuclear export of 60S ribosomal subunits. Required for vegetative growth. This chain is Proteasome-interacting protein CIC1 (CIC1), found in Saccharomyces cerevisiae (strain ATCC 204508 / S288c) (Baker's yeast).